Here is a 401-residue protein sequence, read N- to C-terminus: MQKRLTLLGSTGSIGDSTLDVVARHPERFSVYALTAHRNGDKLVEQCLRFQPEVAVVGDADTAASVAAKLREAGCKTEITYGPQALVDVSKSDGCDTVVAAIVGAAGLAPSLAAARAGKRILLANKEALVMSGAIFMDAVRDNGAVLLPVDSEHNAIFQCLPREAALHGGVSKIILTASGGPFRTREPATLVEVTPDEACKHPNWVMGRKISVDSATMMNKGLEVIEAHWLFNLPGERIEVLIHPQSVIHSMVSYADGSVLAQLGNPDMRTPIAHALAFPDRVDSGVAQLDLLQVASLSFEKPDYTRFPCLALAVKALAEGGLASAALNAANEIAVEAFLARQIGFMAIAQVVDAVLNALPNRSAHALEDVIEADAAARRAAAEFIARLPDGARRTERAVQ.

Threonine 11, glycine 12, serine 13, isoleucine 14, arginine 38, asparagine 39, and asparagine 125 together coordinate NADPH. 1-deoxy-D-xylulose 5-phosphate is bound at residue lysine 126. Glutamate 127 serves as a coordination point for NADPH. Aspartate 151 provides a ligand contact to Mn(2+). 1-deoxy-D-xylulose 5-phosphate-binding residues include serine 152, glutamate 153, serine 179, and histidine 202. Mn(2+) is bound at residue glutamate 153. Residue glycine 208 coordinates NADPH. Residues serine 215, asparagine 220, lysine 221, and glutamate 224 each contribute to the 1-deoxy-D-xylulose 5-phosphate site. Position 224 (glutamate 224) interacts with Mn(2+).

Belongs to the DXR family. Mg(2+) is required as a cofactor. The cofactor is Mn(2+).

It catalyses the reaction 2-C-methyl-D-erythritol 4-phosphate + NADP(+) = 1-deoxy-D-xylulose 5-phosphate + NADPH + H(+). The protein operates within isoprenoid biosynthesis; isopentenyl diphosphate biosynthesis via DXP pathway; isopentenyl diphosphate from 1-deoxy-D-xylulose 5-phosphate: step 1/6. In terms of biological role, catalyzes the NADPH-dependent rearrangement and reduction of 1-deoxy-D-xylulose-5-phosphate (DXP) to 2-C-methyl-D-erythritol 4-phosphate (MEP). The polypeptide is 1-deoxy-D-xylulose 5-phosphate reductoisomerase (Paraburkholderia phytofirmans (strain DSM 17436 / LMG 22146 / PsJN) (Burkholderia phytofirmans)).